A 290-amino-acid chain; its full sequence is Pyridoxal 5'-phosphate synthase subunit PdxS (290 aa).

Aspartate 22 serves as a coordination point for D-ribose 5-phosphate. Lysine 79 acts as the Schiff-base intermediate with D-ribose 5-phosphate in catalysis. Glycine 151 is a D-ribose 5-phosphate binding site. Residue arginine 163 coordinates D-glyceraldehyde 3-phosphate. Residues glycine 212 and 233–234 (GS) each bind D-ribose 5-phosphate.

Belongs to the PdxS/SNZ family. In terms of assembly, in the presence of PdxT, forms a dodecamer of heterodimers.

The catalysed reaction is aldehydo-D-ribose 5-phosphate + D-glyceraldehyde 3-phosphate + L-glutamine = pyridoxal 5'-phosphate + L-glutamate + phosphate + 3 H2O + H(+). It participates in cofactor biosynthesis; pyridoxal 5'-phosphate biosynthesis. Catalyzes the formation of pyridoxal 5'-phosphate from ribose 5-phosphate (RBP), glyceraldehyde 3-phosphate (G3P) and ammonia. The ammonia is provided by the PdxT subunit. Can also use ribulose 5-phosphate and dihydroxyacetone phosphate as substrates, resulting from enzyme-catalyzed isomerization of RBP and G3P, respectively. This Clostridium botulinum (strain Loch Maree / Type A3) protein is Pyridoxal 5'-phosphate synthase subunit PdxS.